A 399-amino-acid polypeptide reads, in one-letter code: uncharacterized protein (399 aa).

At 1 to 8 the chain is on the cytoplasmic side; it reads MHNLQVRR. Residues 9 to 35 form a helical membrane-spanning segment; that stretch reads HYAALKGFYLFAFLGTGSIIPLLSMYL. The Extracellular portion of the chain corresponds to 36-42; it reads TKEQHLS. A helical membrane pass occupies residues 43–71; that stretch reads GSQVGLIMSLGPIVMIFFQPFWGMLSDYT. The Cytoplasmic portion of the chain corresponds to 72-75; it reads QKTK. A helical transmembrane segment spans residues 76 to 101; the sequence is GLLAVCTSITGIIGLAYIAFDSFPLF. Over 102 to 105 the chain is Extracellular; it reads ILIA. A helical transmembrane segment spans residues 106 to 123; the sequence is ACFAAFQSTIIPLSDSIS. The Cytoplasmic portion of the chain corresponds to 124–134; that stretch reads LRYTQETNGNY. The chain crosses the membrane as a helical span at residues 135–157; that stretch reads GGIRLFGSLGFGVAVFAMGQVTN. Residues 158 to 160 lie on the Extracellular side of the membrane; it reads QLY. A helical transmembrane segment spans residues 161–180; that stretch reads PIHVIFIFGCAFLCIAAILA. Residues 181–210 lie on the Cytoplasmic side of the membrane; sequence SQVPGQQKTTKVNIRKGFRELISNKTFLIF. The chain crosses the membrane as a helical span at residues 211 to 230; it reads MIITFTTFAPNLANNTYFSL. Residues 231–234 are Extracellular-facing; sequence FLDK. Residues 235 to 259 form a helical membrane-spanning segment; that stretch reads SGASLSAIGILFFIGVISEIPFMRF. Residues 260–269 lie on the Cytoplasmic side of the membrane; it reads AQTFIDKMGL. Residues 270–289 traverse the membrane as a helical segment; that stretch reads LNVIMLSGGVSLFRWALYFT. At 290–292 the chain is on the extracellular side; that stretch reads APS. The chain crosses the membrane as a helical span at residues 293–315; sequence LWIIYATVFLQGVAIGLFIPAAL. Residues 316-327 lie on the Cytoplasmic side of the membrane; sequence QYVKKITPRHVE. The chain crosses the membrane as a helical span at residues 328 to 355; sequence ATALTMYAAIGNGFGNWFCTFAGGYIFD. Residues 356–358 lie on the Extracellular side of the membrane; that stretch reads YVS. A helical membrane pass occupies residues 359–379; the sequence is IFAVYLLFGILSIAGFGLTLY. The Cytoplasmic segment spans residues 380 to 399; the sequence is LMKAEKNKHTLHQPAVTFKP.

The protein belongs to the major facilitator superfamily.

The protein resides in the cell membrane. This is an uncharacterized protein from Bacillus subtilis (strain 168).